We begin with the raw amino-acid sequence, 39 residues long: Photosystem II reaction center protein L (39 aa).

A helical membrane pass occupies residues 18–38 (SLYLGLLLVAVLGILFSSYFF).

Belongs to the PsbL family. In terms of assembly, PSII is composed of 1 copy each of membrane proteins PsbA, PsbB, PsbC, PsbD, PsbE, PsbF, PsbH, PsbI, PsbJ, PsbK, PsbL, PsbM, PsbT, PsbX, PsbY, PsbZ, Psb30/Ycf12, peripheral proteins PsbO, CyanoQ (PsbQ), PsbU, PsbV and a large number of cofactors. It forms dimeric complexes.

The protein localises to the cellular thylakoid membrane. One of the components of the core complex of photosystem II (PSII). PSII is a light-driven water:plastoquinone oxidoreductase that uses light energy to abstract electrons from H(2)O, generating O(2) and a proton gradient subsequently used for ATP formation. It consists of a core antenna complex that captures photons, and an electron transfer chain that converts photonic excitation into a charge separation. This subunit is found at the monomer-monomer interface and is required for correct PSII assembly and/or dimerization. In Rippkaea orientalis (strain PCC 8801 / RF-1) (Cyanothece sp. (strain PCC 8801)), this protein is Photosystem II reaction center protein L.